Here is a 67-residue protein sequence, read N- to C-terminus: Spiniferin (67 aa).

Residues 1-23 form the signal peptide; the sequence is MKTQLAILLITLVLFQMFSQSDA. Leu-36 carries the post-translational modification Leucine amide. Positions 40–67 are excised as a propeptide; it reads GLNDLSDLDELFDGEISKADLDFLREIM.

Belongs to the non-disulfide-bridged peptide (NDBP) superfamily. Short antimicrobial peptide (group 4) family. In terms of tissue distribution, expressed by the venom gland.

It is found in the secreted. Its subcellular location is the target cell membrane. In terms of biological role, alpha-helical and amphipathic peptide with weak antimicrobial activities against both Gram-positive (MIC=41 uM to &gt;82 uM) and Gram-negative (MIC&gt;82 uM) bacteria. It has extremely weak hemolytic activity against human erythrocytes. The protein is Spiniferin of Heterometrus spinifer (Asia giant forest scorpion).